Here is a 423-residue protein sequence, read N- to C-terminus: Aspartate--tRNA(Asp) ligase (423 aa).

Position 163 (glutamate 163) interacts with L-aspartate. The aspartate stretch occupies residues 185-188 (QLYK). Arginine 207 is an L-aspartate binding site. ATP contacts are provided by residues 207–209 (RAE), 215–217 (RHL), and glutamate 346. Mg(2+) is bound by residues glutamate 346 and serine 349. Residues serine 349 and arginine 353 each coordinate L-aspartate. 394-397 (GLER) provides a ligand contact to ATP.

It belongs to the class-II aminoacyl-tRNA synthetase family. Type 2 subfamily. In terms of assembly, homodimer. The cofactor is Mg(2+).

The protein resides in the cytoplasm. The enzyme catalyses tRNA(Asp) + L-aspartate + ATP = L-aspartyl-tRNA(Asp) + AMP + diphosphate. Its function is as follows. Catalyzes the attachment of L-aspartate to tRNA(Asp) in a two-step reaction: L-aspartate is first activated by ATP to form Asp-AMP and then transferred to the acceptor end of tRNA(Asp). The protein is Aspartate--tRNA(Asp) ligase of Picrophilus torridus (strain ATCC 700027 / DSM 9790 / JCM 10055 / NBRC 100828 / KAW 2/3).